The sequence spans 168 residues: Chemoreceptor glutamine deamidase CheD (168 aa).

Belongs to the CheD family. Forms a complex with CheC.

The enzyme catalyses L-glutaminyl-[protein] + H2O = L-glutamyl-[protein] + NH4(+). Its function is as follows. Deamidates glutamine residues to glutamate on methyl-accepting chemotaxis receptors (MCPs). CheD-mediated MCP deamidation is required for productive communication of the conformational signals of the chemoreceptors to the CheA kinase. This chain is Chemoreceptor glutamine deamidase CheD, found in Bacillus licheniformis (strain ATCC 14580 / DSM 13 / JCM 2505 / CCUG 7422 / NBRC 12200 / NCIMB 9375 / NCTC 10341 / NRRL NRS-1264 / Gibson 46).